Consider the following 265-residue polypeptide: uncharacterized protein (265 aa).

The disordered stretch occupies residues 233 to 265; it reads STACGSDQRPTRLPRASCSSRSISGSAARPWKR. The span at 247 to 265 shows a compositional bias: low complexity; it reads RASCSSRSISGSAARPWKR.

This is an uncharacterized protein from Escherichia coli.